The following is a 79-amino-acid chain: Acyl carrier protein (79 aa).

The region spanning 2–77 is the Carrier domain; it reads SDIEARVRKI…SAIDYANTHQ (76 aa). Ser-37 is subject to O-(pantetheine 4'-phosphoryl)serine.

Belongs to the acyl carrier protein (ACP) family. In terms of processing, 4'-phosphopantetheine is transferred from CoA to a specific serine of apo-ACP by AcpS. This modification is essential for activity because fatty acids are bound in thioester linkage to the sulfhydryl of the prosthetic group.

It localises to the cytoplasm. Its pathway is lipid metabolism; fatty acid biosynthesis. Functionally, carrier of the growing fatty acid chain in fatty acid biosynthesis. The sequence is that of Acyl carrier protein from Verminephrobacter eiseniae (strain EF01-2).